Here is a 571-residue protein sequence, read N- to C-terminus: MRTSQYLFSTLKETPNDAQVVSHQLMLRAGMIRPMASGLYNWLPTGIKVLKKVENIIREEMNKGGAIEVLMPVVQPAELWQESGRWNDYGAELLRFVDRGSRDFVLGPTHEEVITDLVRREVSSYKQLPLNLYQIQTKFRDEVRPRFGVMRSREFVMKDAYSFHVDKASLQETYDVMYQVYSNIFTRLGLDFRAVQADTGSIGGSASHEFQVLASSGEDDVVFSTESDFAANIELAEAVAVGERQAPTAEMQLVDTPNAKTINELVEQFNLPIGKTVKTLIVKGATEEQPLVALVLRGDHELNEIKAQKHPLVADPLEFADEAEIKAKIGAGVGSLGVINLNVPAIIDRSVAVMSDFGCGANIDGKHYFNVNWERDAAMPEVADLRNVVEGDPSPDGKGVLQIKRGIEVGHIFQLGTKYSEAMKATVQGEDGKPLVMTMGCYGIGVTRVVAAAIEQHHDERGIIWPSDEIAPFTVAIVPMNMHKSESVQQFSEELYRTLKAQGVDVIFDDRKERPGVMFADMELIGVPHMVVIGEKNLANGEIEYKNRRTGEKQMIAKDQLLAFLKENVKA.

This sequence belongs to the class-II aminoacyl-tRNA synthetase family. ProS type 1 subfamily. As to quaternary structure, homodimer.

The protein localises to the cytoplasm. The enzyme catalyses tRNA(Pro) + L-proline + ATP = L-prolyl-tRNA(Pro) + AMP + diphosphate. In terms of biological role, catalyzes the attachment of proline to tRNA(Pro) in a two-step reaction: proline is first activated by ATP to form Pro-AMP and then transferred to the acceptor end of tRNA(Pro). As ProRS can inadvertently accommodate and process non-cognate amino acids such as alanine and cysteine, to avoid such errors it has two additional distinct editing activities against alanine. One activity is designated as 'pretransfer' editing and involves the tRNA(Pro)-independent hydrolysis of activated Ala-AMP. The other activity is designated 'posttransfer' editing and involves deacylation of mischarged Ala-tRNA(Pro). The misacylated Cys-tRNA(Pro) is not edited by ProRS. This Actinobacillus pleuropneumoniae serotype 5b (strain L20) protein is Proline--tRNA ligase.